The primary structure comprises 338 residues: Glycerol-3-phosphate dehydrogenase [NAD(P)+] (338 aa).

Positions 14, 50, and 110 each coordinate NADPH. Positions 110, 141, and 143 each coordinate sn-glycerol 3-phosphate. Position 145 (Ala145) interacts with NADPH. Positions 196, 249, 259, 260, and 261 each coordinate sn-glycerol 3-phosphate. The Proton acceptor role is filled by Lys196. Residue Arg260 coordinates NADPH. Glu285 is a binding site for NADPH.

Belongs to the NAD-dependent glycerol-3-phosphate dehydrogenase family.

It localises to the cytoplasm. The catalysed reaction is sn-glycerol 3-phosphate + NAD(+) = dihydroxyacetone phosphate + NADH + H(+). It carries out the reaction sn-glycerol 3-phosphate + NADP(+) = dihydroxyacetone phosphate + NADPH + H(+). It functions in the pathway membrane lipid metabolism; glycerophospholipid metabolism. In terms of biological role, catalyzes the reduction of the glycolytic intermediate dihydroxyacetone phosphate (DHAP) to sn-glycerol 3-phosphate (G3P), the key precursor for phospholipid synthesis. This is Glycerol-3-phosphate dehydrogenase [NAD(P)+] from Malacoplasma penetrans (strain HF-2) (Mycoplasma penetrans).